A 140-amino-acid polypeptide reads, in one-letter code: Pro-variola growth factor (140 aa).

The N-terminal stretch at 1–18 (MSMKYLMLLFAAMIIRSF) is a signal peptide. The Extracellular portion of the chain corresponds to 19–100 (ANSGNAIETT…SEKPNTTTSY (82 aa)). Residue N34 is glycosylated (N-linked (GlcNAc...) asparagine; by host). The region spanning 41–81 (AIRLCGPEGDRYCFHGICIHARDIDGMYCRCSHGYTGIRCQ) is the EGF-like domain. Cystine bridges form between C45–C58, C53–C69, and C71–C80. N95 is a glycosylation site (N-linked (GlcNAc...) asparagine; by host). A helical transmembrane segment spans residues 101-121 (IPSPGIVLVLLVSIIVCCLLF). Residues 122–140 (VYRFTRRTNKLPLQDMVVP) are Cytoplasmic-facing.

It belongs to the orthopoxvirus OPG019 family. Variola growth factor interacts with host EGFR and promotes EGFR dimerization.

It is found in the host membrane. Its subcellular location is the secreted. In terms of biological role, stimulates cellular proliferation (hyperplasia)and mobility around infected cells to promote rapid and efficient spread of infection. This effect is beneficial for virus replication in vivo, because poxviruses replicate possibly better in proliferating cells than in quiescent cells. Acts by binding host EGFR, inducing its dimerization, autophosphorylation and leading to activation of several cellular pathways regulating cell proliferation or cell survival. The activation by host EGFR of mitogen activated protein kinases (MAPK) and extracellular-signal regulated kinases (ERK) are essential for the positive effect of vaccinia growth factor on poxvirus virulence in vivo. The chain is Pro-variola growth factor (OPG019) from Variola virus (isolate Human/India/Ind3/1967) (VARV).